The sequence spans 142 residues: Small ribosomal subunit protein bS6 (142 aa).

A disordered region spans residues 110-142 (NKKPSHAKEKHEKTEHAHSHHAEEAKSTESHSE).

This sequence belongs to the bacterial ribosomal protein bS6 family.

Its function is as follows. Binds together with bS18 to 16S ribosomal RNA. The polypeptide is Small ribosomal subunit protein bS6 (Helicobacter pylori (strain G27)).